A 338-amino-acid chain; its full sequence is Glyceraldehyde-3-phosphate dehydrogenase (338 aa).

NAD(+)-binding positions include 12–13 (RI), Asp-38, and Ser-125. D-glyceraldehyde 3-phosphate contacts are provided by residues 155-157 (SCT), Thr-186, 216-217 (TG), and Arg-239. The active-site Nucleophile is Cys-156. Position 320 (Asn-320) interacts with NAD(+).

The protein belongs to the glyceraldehyde-3-phosphate dehydrogenase family. Homotetramer.

Its subcellular location is the cytoplasm. It catalyses the reaction D-glyceraldehyde 3-phosphate + phosphate + NAD(+) = (2R)-3-phospho-glyceroyl phosphate + NADH + H(+). It participates in carbohydrate degradation; glycolysis; pyruvate from D-glyceraldehyde 3-phosphate: step 1/5. Functionally, catalyzes the oxidative phosphorylation of glyceraldehyde 3-phosphate (G3P) to 1,3-bisphosphoglycerate (BPG) using the cofactor NAD. The first reaction step involves the formation of a hemiacetal intermediate between G3P and a cysteine residue, and this hemiacetal intermediate is then oxidized to a thioester, with concomitant reduction of NAD to NADH. The reduced NADH is then exchanged with the second NAD, and the thioester is attacked by a nucleophilic inorganic phosphate to produce BPG. This chain is Glyceraldehyde-3-phosphate dehydrogenase (gap), found in Lactobacillus delbrueckii subsp. bulgaricus.